The sequence spans 1202 residues: DNA-directed RNA polymerase subunit beta (1202 aa).

It belongs to the RNA polymerase beta chain family. As to quaternary structure, the RNAP catalytic core consists of 2 alpha, 1 beta, 1 beta' and 1 omega subunit. When a sigma factor is associated with the core the holoenzyme is formed, which can initiate transcription.

It catalyses the reaction RNA(n) + a ribonucleoside 5'-triphosphate = RNA(n+1) + diphosphate. Its function is as follows. DNA-dependent RNA polymerase catalyzes the transcription of DNA into RNA using the four ribonucleoside triphosphates as substrates. In Leuconostoc mesenteroides subsp. mesenteroides (strain ATCC 8293 / DSM 20343 / BCRC 11652 / CCM 1803 / JCM 6124 / NCDO 523 / NBRC 100496 / NCIMB 8023 / NCTC 12954 / NRRL B-1118 / 37Y), this protein is DNA-directed RNA polymerase subunit beta.